Here is a 330-residue protein sequence, read N- to C-terminus: ADP-L-glycero-D-manno-heptose-6-epimerase (330 aa).

Residues 11 to 12, 32 to 33, lysine 39, lysine 54, 75 to 79, and asparagine 92 each bind NADP(+); these read FI, DN, and EGACS. Tyrosine 139 functions as the Proton acceptor in the catalytic mechanism. An NADP(+)-binding site is contributed by lysine 143. Substrate is bound at residue asparagine 168. Valine 169 and lysine 177 together coordinate NADP(+). The Proton acceptor role is filled by lysine 177. Substrate contacts are provided by residues arginine 179, histidine 186, 200–203, arginine 213, and tyrosine 292; that span reads FGEY.

The protein belongs to the NAD(P)-dependent epimerase/dehydratase family. HldD subfamily. In terms of assembly, homopentamer. NADP(+) is required as a cofactor.

The enzyme catalyses ADP-D-glycero-beta-D-manno-heptose = ADP-L-glycero-beta-D-manno-heptose. It functions in the pathway nucleotide-sugar biosynthesis; ADP-L-glycero-beta-D-manno-heptose biosynthesis; ADP-L-glycero-beta-D-manno-heptose from D-glycero-beta-D-manno-heptose 7-phosphate: step 4/4. Functionally, catalyzes the interconversion between ADP-D-glycero-beta-D-manno-heptose and ADP-L-glycero-beta-D-manno-heptose via an epimerization at carbon 6 of the heptose. The polypeptide is ADP-L-glycero-D-manno-heptose-6-epimerase (Burkholderia ambifaria (strain MC40-6)).